A 273-amino-acid chain; its full sequence is Probable cysteine-rich repeat secretory protein 6 (273 aa).

The first 21 residues, 1–21 (MTRIIDVSLFCFFLFSLGAMS), serve as a signal peptide directing secretion. Gnk2-homologous domains follow at residues 22 to 122 (QPSQ…DNSF) and 128 to 241 (DSPA…ISAL).

The protein belongs to the cysteine-rich repeat secretory protein family.

It is found in the secreted. The sequence is that of Probable cysteine-rich repeat secretory protein 6 (CRRSP6) from Arabidopsis thaliana (Mouse-ear cress).